The sequence spans 999 residues: Signal peptide, CUB and EGF-like domain-containing protein 2 (999 aa).

The signal sequence occupies residues 1–31; it reads MGVAGRNRPGAAWAVLLLLLLLPPLLLLAGA. In terms of domain architecture, EGF-like 1; calcium-binding spans 45 to 85; the sequence is DVDECAQGLDDCHADALCQNTPTSYKCSCKPGYQGEGRQCE. Intrachain disulfides connect cysteine 49-cysteine 62, cysteine 56-cysteine 71, cysteine 73-cysteine 84, cysteine 90-cysteine 102, cysteine 98-cysteine 111, and cysteine 113-cysteine 126. The EGF-like 2; calcium-binding domain maps to 86-127; sequence DIDECGNELNGGCVHDCLNIPGNYRCTCFDGFMLAHDGHNCL. The EGF-like 3; calcium-binding domain occupies 128 to 168; that stretch reads DVDECLENNGGCQHTCVNVMGSYECCCKEGFFLSDNQHTCI. 3 EGF-like domains span residues 177-213, 217-252, and 286-321; these read CMNK…QRDC, CNHG…GRSC, and CAVN…GKTC. The 41-residue stretch at 323–363 folds into the EGF-like 7; calcium-binding domain; sequence DIDECQTRNGGCDHFCKNIVGSFDCGCKKGFKLLTDEKSCQ. One can recognise an EGF-like 8; calcium-binding domain in the interval 364–402; the sequence is DVDECSLDRTCDHSCINHPGTFACACNRGYTLYGFTHCG. Cystine bridges form between cysteine 368–cysteine 378, cysteine 374–cysteine 387, cysteine 389–cysteine 401, cysteine 407–cysteine 418, cysteine 414–cysteine 427, and cysteine 429–cysteine 442. The 41-residue stretch at 403–443 folds into the EGF-like 9; calcium-binding domain; it reads DTNECSINNGGCQQVCVNTVGSYECQCHPGYKLHWNKKDCV. A glycan (N-linked (GlcNAc...) asparagine) is linked at asparagine 659. Cysteine 809 and cysteine 835 form a disulfide bridge. Residues 809–921 enclose the CUB domain; that stretch reads CGGELGDFTG…RGFQVPYVTY (113 aa). An interaction with the cholesterol-anchor of SHH region spans residues 847 to 856; the sequence is ILIVVPEIFL. Cysteine 862 and cysteine 883 are joined by a disulfide.

As to quaternary structure, forms homooligomers. Forms heterooligomers with SCUBE1. Forms heterooligomers with SCUBE3. Interacts with SHH via the cholesterol anchor of the dually lipid-modified SHH (ShhNp). Interacts with PTCH1. Interacts with VEGFR2. N-glycosylated. In terms of tissue distribution, expressed in a broad spectrum of adult tissues.

The protein localises to the secreted. It localises to the cell surface. Lipid-binding protein required for SHH long-range signaling by binding to the dually lipid-modified SHH (ShhNp) and by promoting ShhNp mobilization, solubilization and release from the cell membrane. Acts by enhancing the proteolytic processing (shedding) of the lipid-modified N- and C- terminal of ShhNp at the cell surface. Synergizes with DISP1 to increase SHH secretion. Probable cell surface coreceptor for VEGFR2 involved in VEGFR2-mediated angiogenesis. The protein is Signal peptide, CUB and EGF-like domain-containing protein 2 of Homo sapiens (Human).